The primary structure comprises 62 residues: Photosystem II reaction center protein Z (62 aa).

The next 2 membrane-spanning stretches (helical) occupy residues 8-28 and 41-61; these read FLIA…VAYA and YVGS…NFLV.

Belongs to the PsbZ family. In terms of assembly, PSII is composed of 1 copy each of membrane proteins PsbA, PsbB, PsbC, PsbD, PsbE, PsbF, PsbH, PsbI, PsbJ, PsbK, PsbL, PsbM, PsbT, PsbX, PsbY, PsbZ, Psb30/Ycf12, peripheral proteins PsbO, CyanoQ (PsbQ), PsbU, PsbV and a large number of cofactors. It forms dimeric complexes.

The protein localises to the cellular thylakoid membrane. May control the interaction of photosystem II (PSII) cores with the light-harvesting antenna, regulates electron flow through the 2 photosystem reaction centers. PSII is a light-driven water plastoquinone oxidoreductase, using light energy to abstract electrons from H(2)O, generating a proton gradient subsequently used for ATP formation. The polypeptide is Photosystem II reaction center protein Z (Microcystis aeruginosa (strain NIES-843 / IAM M-2473)).